A 437-amino-acid polypeptide reads, in one-letter code: UDP-N-acetylmuramate--L-alanine ligase (437 aa).

114–120 (GTHGKTS) is a binding site for ATP.

It belongs to the MurCDEF family.

It is found in the cytoplasm. It carries out the reaction UDP-N-acetyl-alpha-D-muramate + L-alanine + ATP = UDP-N-acetyl-alpha-D-muramoyl-L-alanine + ADP + phosphate + H(+). Its pathway is cell wall biogenesis; peptidoglycan biosynthesis. Its function is as follows. Cell wall formation. This is UDP-N-acetylmuramate--L-alanine ligase from Lactobacillus helveticus (strain DPC 4571).